The sequence spans 605 residues: Isocitrate dehydrogenase kinase/phosphatase (605 aa).

ATP-binding positions include 327 to 333 (APGIKGL) and Lys348. Asp383 is an active-site residue.

The protein belongs to the AceK family.

The protein localises to the cytoplasm. It carries out the reaction L-seryl-[isocitrate dehydrogenase] + ATP = O-phospho-L-seryl-[isocitrate dehydrogenase] + ADP + H(+). In terms of biological role, bifunctional enzyme which can phosphorylate or dephosphorylate isocitrate dehydrogenase (IDH) on a specific serine residue. This is a regulatory mechanism which enables bacteria to bypass the Krebs cycle via the glyoxylate shunt in response to the source of carbon. When bacteria are grown on glucose, IDH is fully active and unphosphorylated, but when grown on acetate or ethanol, the activity of IDH declines drastically concomitant with its phosphorylation. The polypeptide is Isocitrate dehydrogenase kinase/phosphatase (Burkholderia orbicola (strain MC0-3)).